The following is a 237-amino-acid chain: Phosphoribosylaminoimidazole-succinocarboxamide synthase (237 aa).

Belongs to the SAICAR synthetase family.

The catalysed reaction is 5-amino-1-(5-phospho-D-ribosyl)imidazole-4-carboxylate + L-aspartate + ATP = (2S)-2-[5-amino-1-(5-phospho-beta-D-ribosyl)imidazole-4-carboxamido]succinate + ADP + phosphate + 2 H(+). It functions in the pathway purine metabolism; IMP biosynthesis via de novo pathway; 5-amino-1-(5-phospho-D-ribosyl)imidazole-4-carboxamide from 5-amino-1-(5-phospho-D-ribosyl)imidazole-4-carboxylate: step 1/2. The chain is Phosphoribosylaminoimidazole-succinocarboxamide synthase from Psychrobacter arcticus (strain DSM 17307 / VKM B-2377 / 273-4).